Reading from the N-terminus, the 380-residue chain is Tryptophan 2,3-dioxygenase (380 aa).

Residues 57-61 and arginine 128 contribute to the substrate site; that span reads FIITH. Residue histidine 313 coordinates heme. A substrate-binding site is contributed by threonine 328.

This sequence belongs to the tryptophan 2,3-dioxygenase family. Homotetramer. Dimer of dimers. Requires heme as cofactor.

The enzyme catalyses L-tryptophan + O2 = N-formyl-L-kynurenine. The protein operates within amino-acid degradation; L-tryptophan degradation via kynurenine pathway; L-kynurenine from L-tryptophan: step 1/2. Its pathway is pigment biosynthesis; ommochrome biosynthesis. Functionally, heme-dependent dioxygenase that catalyzes the oxidative cleavage of the L-tryptophan (L-Trp) pyrrole ring and converts L-tryptophan to N-formyl-L-kynurenine. Catalyzes the oxidative cleavage of the indole moiety. The chain is Tryptophan 2,3-dioxygenase from Drosophila mojavensis (Fruit fly).